The chain runs to 529 residues: Interleukin-21 receptor (529 aa).

The signal sequence occupies residues 1-19 (MPRGPVAALLLLILHGAWS). 3 cysteine pairs are disulfide-bonded: cysteine 20–cysteine 109, cysteine 25–cysteine 35, and cysteine 65–cysteine 81. Residues 20 to 237 (CLDLTCYTDY…GEPEAGWDPH (218 aa)) are Extracellular-facing. Fibronectin type-III domains are found at residues 21–118 (LDLT…AESI) and 119–228 (KPAP…TQAG). Asparagine 73, asparagine 97, asparagine 104, asparagine 125, and asparagine 182 each carry an N-linked (GlcNAc...) asparagine glycan. A glycan (C-linked (Man) tryptophan) is linked at tryptophan 214. Positions 214 to 218 (WSEWS) match the WSXWS motif motif. Residues 238 to 258 (MLLLLAVLIIVLVFMGLKIHL) traverse the membrane as a helical segment. The Cytoplasmic portion of the chain corresponds to 259 to 529 (PWRLWKKIWA…PPVDSGAQSS (271 aa)). The short motif at 266–274 (IWAPVPTPE) is the Box 1 motif element. The interval 458–529 (TADPTWRTGS…PPVDSGAQSS (72 aa)) is disordered.

This sequence belongs to the type I cytokine receptor family. Type 4 subfamily. Heterodimer with the common gamma subunit. Associates with JAK1. In terms of processing, C-mannosylated at Trp-214 in the WSXWS motif, the sugar chain makes extensive hydrogen bonds with Asn-73 sugar, and bridges the two fibronectin domains transforming the V-shaped receptor into an A-frame. Selectively expressed in lymphoid tissues. Most highly expressed in thymus and spleen.

It localises to the membrane. In terms of biological role, this is a receptor for interleukin-21. This is Interleukin-21 receptor (Il21r) from Mus musculus (Mouse).